We begin with the raw amino-acid sequence, 147 residues long: Nucleoside diphosphate kinase (147 aa).

The ATP site is built by K9, F57, R85, T91, R102, and N112. H115 serves as the catalytic Pros-phosphohistidine intermediate.

It belongs to the NDK family. Homotetramer. The cofactor is Mg(2+).

It is found in the cytoplasm. It catalyses the reaction a 2'-deoxyribonucleoside 5'-diphosphate + ATP = a 2'-deoxyribonucleoside 5'-triphosphate + ADP. It carries out the reaction a ribonucleoside 5'-diphosphate + ATP = a ribonucleoside 5'-triphosphate + ADP. Its function is as follows. Major role in the synthesis of nucleoside triphosphates other than ATP. The ATP gamma phosphate is transferred to the NDP beta phosphate via a ping-pong mechanism, using a phosphorylated active-site intermediate. This Brevibacillus brevis (strain 47 / JCM 6285 / NBRC 100599) protein is Nucleoside diphosphate kinase.